The following is a 302-amino-acid chain: Putative peptide permease protein BMEII0861 (302 aa).

The tract at residues 1–22 is disordered; the sequence is MRSSIHASRLRKMGQSIPASTG. Transmembrane regions (helical) follow at residues 38–58, 101–121, 147–167, 230–250, and 268–288; these read IFGL…PLWL, LLVA…IGAI, IFLL…VVVI, ILLE…AASW, and WQWL…NFIG. The region spanning 97–288 is the ABC transmembrane type-1 domain; that stretch reads GRISLLVAVS…LAVLAINFIG (192 aa).

It belongs to the binding-protein-dependent transport system permease family. As to quaternary structure, the complex is composed of two ATP-binding proteins (BMEII0863 and BMEII0864), two transmembrane proteins (BMEII0860 and BMEII0861) and a solute-binding protein (BMEII0859).

The protein localises to the cell inner membrane. Its function is as follows. Probably part of an ABC transporter complex that could be involved in peptide import. Probably responsible for the translocation of the substrate across the membrane. The chain is Putative peptide permease protein BMEII0861 from Brucella melitensis biotype 1 (strain ATCC 23456 / CCUG 17765 / NCTC 10094 / 16M).